The chain runs to 205 residues: Urease accessory protein UreG (205 aa).

11-18 (GPVGSGKT) lines the GTP pocket.

The protein belongs to the SIMIBI class G3E GTPase family. UreG subfamily. Homodimer. UreD, UreF and UreG form a complex that acts as a GTP-hydrolysis-dependent molecular chaperone, activating the urease apoprotein by helping to assemble the nickel containing metallocenter of UreC. The UreE protein probably delivers the nickel.

It is found in the cytoplasm. Facilitates the functional incorporation of the urease nickel metallocenter. This process requires GTP hydrolysis, probably effectuated by UreG. The sequence is that of Urease accessory protein UreG from Prochlorococcus marinus (strain NATL1A).